Consider the following 1146-residue polypeptide: Nucleolar protein 6 (1146 aa).

The disordered stretch occupies residues 1–48 (MGPAPAGEQLRGATGEPEVMEPALEGTGKEGKKASSRKRTLAEPPAKG). Phosphoserine is present on S56. A coiled-coil region spans residues 83–114 (LLRLQVEELLKEVRLSEKKKDRIDAFLREVNQ). Phosphoserine is present on residues S283, S289, and S811.

Belongs to the NRAP family. In terms of assembly, part of the small subunit (SSU) processome, composed of more than 70 proteins and the RNA chaperone small nucleolar RNA (snoRNA) U3. Interacts with RRP7A; required for NOL6 localization to nucleolus.

The protein localises to the nucleus. Its subcellular location is the nucleolus. It localises to the chromosome. In terms of biological role, part of the small subunit (SSU) processome, first precursor of the small eukaryotic ribosomal subunit. During the assembly of the SSU processome in the nucleolus, many ribosome biogenesis factors, an RNA chaperone and ribosomal proteins associate with the nascent pre-rRNA and work in concert to generate RNA folding, modifications, rearrangements and cleavage as well as targeted degradation of pre-ribosomal RNA by the RNA exosome. The chain is Nucleolar protein 6 from Homo sapiens (Human).